The following is a 162-amino-acid chain: MARVEL domain-containing protein 1 (162 aa).

Topologically, residues 1–17 are cytoplasmic; the sequence is MPTQPQEKRSFLQFLKS. An MARVEL domain is found at 14-155; that stretch reads FLKSFVGIVR…SGIYCSCRKC (142 aa). A helical transmembrane segment spans residues 18–38; it reads FVGIVRVLQILLGAGLWVTIA. At 39–47 the chain is on the extracellular side; the sequence is ANKYEGSIH. A helical transmembrane segment spans residues 48–68; that stretch reads FVLFVAVLFWLLTLAIFILTL. Over 69 to 86 the chain is Cytoplasmic; the sequence is LDKQDLVPIVGGERWLLS. Residues 87–107 traverse the membrane as a helical segment; the sequence is NLIHDVVATLLYLSTIGIMIY. At 108–127 the chain is on the extracellular side; that stretch reads KTQKNSYCNLDVYKHHCLYK. The chain crosses the membrane as a helical span at residues 128 to 148; that stretch reads VYLTASVFACLTAAVYLLSGI. Residues 149 to 162 are Cytoplasmic-facing; sequence YCSCRKCRGERTVV.

The protein localises to the membrane. It is found in the nucleus. The polypeptide is MARVEL domain-containing protein 1 (marveld1) (Danio rerio (Zebrafish)).